The chain runs to 484 residues: UDP-N-acetylmuramate--L-alanine ligase (484 aa).

122-128 lines the ATP pocket; the sequence is GTHGKTT.

The protein belongs to the MurCDEF family.

It is found in the cytoplasm. It catalyses the reaction UDP-N-acetyl-alpha-D-muramate + L-alanine + ATP = UDP-N-acetyl-alpha-D-muramoyl-L-alanine + ADP + phosphate + H(+). It participates in cell wall biogenesis; peptidoglycan biosynthesis. Cell wall formation. This chain is UDP-N-acetylmuramate--L-alanine ligase, found in Mycobacterium sp. (strain JLS).